The primary structure comprises 176 residues: PRL-1 phosphatase (176 aa).

Residues 13–166 enclose the Tyrosine-protein phosphatase domain; that stretch reads APALIEYKGM…YKPKARLKHK (154 aa). Cys109 (phosphocysteine intermediate) is an active-site residue. Cys173 is subject to Cysteine methyl ester. Residue Cys173 is the site of S-farnesyl cysteine attachment. Positions 174-176 are cleaved as a propeptide — removed in mature form; it reads SVQ.

It belongs to the protein-tyrosine phosphatase family. In terms of assembly, homotrimer. Interacts with uex, possibly at the plasma membrane. Expressed in the adult head (at protein level). Expressed in neurons in the antennal lobe and V-glomeruli (at protein level). Expressed in dorsocentral neurons (at protein level).

The protein resides in the cytoplasm. It localises to the cell membrane. It is found in the apicolateral cell membrane. Its subcellular location is the cell projection. The protein localises to the axon. The catalysed reaction is O-phospho-L-tyrosyl-[protein] + H2O = L-tyrosyl-[protein] + phosphate. Probable phosphatase. Inhibits growth possibly by negatively regulating Src64B-induced growth. Regulates central nervous system circuit formation and stabilization of synapse-dense terminal arbors. In dorsocentral neurons, regulates synaptogenesis in terminal arbors via modulation of the insulin receptor pathway, likely upstream of Akt1, and via reduction of PtdIns(4,5)P2 (Phosphatidylinositol 4,5-bisphosphate) levels. In the nervous system, plays a protective role together with uex in response to olfactory carbon dioxide stimulation. This chain is PRL-1 phosphatase, found in Drosophila melanogaster (Fruit fly).